Here is a 253-residue protein sequence, read N- to C-terminus: uncharacterized protein (253 aa).

Belongs to the A.longa ORF167/ORF288 family.

Its subcellular location is the plastid. This is an uncharacterized protein from Euglena longa (Euglenophycean alga).